The following is a 212-amino-acid chain: Deoxyribose-phosphate aldolase (212 aa).

Aspartate 89 functions as the Proton donor/acceptor in the catalytic mechanism. The active-site Schiff-base intermediate with acetaldehyde is the lysine 151. Lysine 180 serves as the catalytic Proton donor/acceptor.

The protein belongs to the DeoC/FbaB aldolase family. DeoC type 1 subfamily.

It localises to the cytoplasm. The enzyme catalyses 2-deoxy-D-ribose 5-phosphate = D-glyceraldehyde 3-phosphate + acetaldehyde. Its pathway is carbohydrate degradation; 2-deoxy-D-ribose 1-phosphate degradation; D-glyceraldehyde 3-phosphate and acetaldehyde from 2-deoxy-alpha-D-ribose 1-phosphate: step 2/2. Catalyzes a reversible aldol reaction between acetaldehyde and D-glyceraldehyde 3-phosphate to generate 2-deoxy-D-ribose 5-phosphate. In Clostridium botulinum (strain Okra / Type B1), this protein is Deoxyribose-phosphate aldolase.